We begin with the raw amino-acid sequence, 452 residues long: Histone acetyltransferase type B subunit 2 (452 aa).

WD repeat units follow at residues 155 to 195 (YEDG…NSKE), 205 to 245 (HHTK…SDGS), 256 to 296 (HHDA…NKAA), 300 to 340 (KESR…TPIS), 344 to 384 (SHCD…DDLS), and 401 to 441 (GHSS…SNDE).

It belongs to the WD repeat RBAP46/RBAP48/MSI1 family. Component of the HAT-B complex composed of at least HAT1 and HAT2. The HAT-B complex binds to histone H4 tail.

The protein resides in the cytoplasm. Its subcellular location is the nucleus. In terms of biological role, regulatory subunit of the histone acetylase B (HAT-B) complex. The complex acetylates 'Lys-12' of histone H4 which is required for telomeric silencing. This chain is Histone acetyltransferase type B subunit 2 (HAT2), found in Yarrowia lipolytica (strain CLIB 122 / E 150) (Yeast).